Reading from the N-terminus, the 119-residue chain is 5-hydroxyisourate hydrolase (119 aa).

Substrate-binding residues include histidine 8, arginine 47, and tyrosine 116.

It belongs to the transthyretin family. 5-hydroxyisourate hydrolase subfamily. Homotetramer.

The catalysed reaction is 5-hydroxyisourate + H2O = 5-hydroxy-2-oxo-4-ureido-2,5-dihydro-1H-imidazole-5-carboxylate + H(+). It participates in purine metabolism; urate degradation; (S)-allantoin from urate: step 2/3. Catalyzes the hydrolysis of 5-hydroxyisourate (HIU) to 2-oxo-4-hydroxy-4-carboxy-5-ureidoimidazoline (OHCU). The polypeptide is 5-hydroxyisourate hydrolase (Halalkalibacterium halodurans (strain ATCC BAA-125 / DSM 18197 / FERM 7344 / JCM 9153 / C-125) (Bacillus halodurans)).